The chain runs to 236 residues: uncharacterized protein (236 aa).

It to E.coli YfjP and YkfA.

This is an uncharacterized protein from Escherichia coli (strain K12).